Here is a 409-residue protein sequence, read N- to C-terminus: Elongation factor Tu (409 aa).

One can recognise a tr-type G domain in the interval 10–214 (KPHVNIGTIG…AVDSYIPTPE (205 aa)). A G1 region spans residues 19-26 (GHVDHGKT). GTP is bound at residue 19 to 26 (GHVDHGKT). Thr26 contacts Mg(2+). Residues 60 to 64 (GITIN) form a G2 region. The tract at residues 81-84 (DCPG) is G3. GTP is bound by residues 81 to 85 (DCPGH) and 136 to 139 (NKVD). Positions 136–139 (NKVD) are G4. Residues 174–176 (SGL) are G5.

Belongs to the TRAFAC class translation factor GTPase superfamily. Classic translation factor GTPase family. EF-Tu/EF-1A subfamily. As to quaternary structure, monomer.

It localises to the cytoplasm. It carries out the reaction GTP + H2O = GDP + phosphate + H(+). GTP hydrolase that promotes the GTP-dependent binding of aminoacyl-tRNA to the A-site of ribosomes during protein biosynthesis. In Cyanothece sp. (strain PCC 7425 / ATCC 29141), this protein is Elongation factor Tu.